Here is a 359-residue protein sequence, read N- to C-terminus: UDP-N-acetylglucosamine--N-acetylmuramyl-(pentapeptide) pyrophosphoryl-undecaprenol N-acetylglucosamine transferase (359 aa).

UDP-N-acetyl-alpha-D-glucosamine-binding positions include 15–17 (SGG), Asn-127, Arg-164, Ser-192, Ile-246, 265–270 (ALTVSE), and Gln-290.

The protein belongs to the glycosyltransferase 28 family. MurG subfamily.

Its subcellular location is the cell membrane. It carries out the reaction di-trans,octa-cis-undecaprenyl diphospho-N-acetyl-alpha-D-muramoyl-L-alanyl-D-glutamyl-meso-2,6-diaminopimeloyl-D-alanyl-D-alanine + UDP-N-acetyl-alpha-D-glucosamine = di-trans,octa-cis-undecaprenyl diphospho-[N-acetyl-alpha-D-glucosaminyl-(1-&gt;4)]-N-acetyl-alpha-D-muramoyl-L-alanyl-D-glutamyl-meso-2,6-diaminopimeloyl-D-alanyl-D-alanine + UDP + H(+). It participates in cell wall biogenesis; peptidoglycan biosynthesis. In terms of biological role, cell wall formation. Catalyzes the transfer of a GlcNAc subunit on undecaprenyl-pyrophosphoryl-MurNAc-pentapeptide (lipid intermediate I) to form undecaprenyl-pyrophosphoryl-MurNAc-(pentapeptide)GlcNAc (lipid intermediate II). The chain is UDP-N-acetylglucosamine--N-acetylmuramyl-(pentapeptide) pyrophosphoryl-undecaprenol N-acetylglucosamine transferase from Wigglesworthia glossinidia brevipalpis.